Here is a 187-residue protein sequence, read N- to C-terminus: Phospholipase A2-gamma (187 aa).

A signal peptide spans 1 to 25; that stretch reads MITGLALSRVAFGLTAFLLLAVVSS. Cystine bridges form between Cys-29-Cys-56, Cys-33-Cys-62, Cys-38-Cys-115, Cys-49-Cys-69, Cys-68-Cys-93, and Cys-75-Cys-86. Residues Tyr-48, Gly-50, and Tyr-53 each coordinate Ca(2+). The active site involves His-72. Asp-73 is a binding site for Ca(2+).

Belongs to the phospholipase A2 family. Ca(2+) serves as cofactor. As to expression, strongly expressed in mature flowers but weakly expressed in other tissues. Detected in buds, open flowers and in pollen.

It is found in the secreted. The protein resides in the golgi apparatus. Its subcellular location is the trans-Golgi network. It localises to the endoplasmic reticulum. It catalyses the reaction a 1,2-diacyl-sn-glycero-3-phosphocholine + H2O = a 1-acyl-sn-glycero-3-phosphocholine + a fatty acid + H(+). PA2 catalyzes the calcium-dependent hydrolysis of the 2-acyl groups in 3-sn-phosphoglycerides. Releases lysophospholipids (LPLs) and free fatty acids (FFAs) from membrane phospholipids in response to hormones and other external stimuli. Plays a role in pollen development and germination and tube growth. This is Phospholipase A2-gamma (PLA2-GAMMA) from Arabidopsis thaliana (Mouse-ear cress).